We begin with the raw amino-acid sequence, 722 residues long: Bifunctional UDP-N-acetylglucosamine 2-epimerase/N-acetylmannosamine kinase (722 aa).

UDP is bound by residues Arg19, Ser23, Arg113, His220, and Asn253. CMP-N-acetyl-beta-neuraminate is bound by residues Lys259, Glu271, Lys280, and His281. The UDP site is built by Val282, Ser301, Ser302, Glu307, and Arg321. Residues 406 to 722 form an N-acetylmannosamine kinase region; it reads TLSALAVDLG…VLDYTTRRIH (317 aa). Mg(2+) is bound at residue Asp413. Gly416 is a binding site for an N-acyl-D-mannosamine 6-phosphate. Positions 417, 418, and 420 each coordinate ADP. An N-acyl-D-mannosamine 6-phosphate is bound by residues Gly476, Arg477, Thr489, Asn516, Asp517, and Gly545. 5 residues coordinate an N-acyl-D-mannosamine: Gly476, Arg477, Thr489, Asn516, and Asp517. The active site involves Asp517. An N-acyl-D-mannosamine is bound by residues Glu566 and His569. His569 contacts an N-acyl-D-mannosamine 6-phosphate. 4 residues coordinate Zn(2+): His569, Cys579, Cys581, and Cys586. Residue Glu588 participates in an N-acyl-D-mannosamine 6-phosphate binding. Glu588 contacts an N-acyl-D-mannosamine.

This sequence in the N-terminal section; belongs to the UDP-N-acetylglucosamine 2-epimerase family. In the C-terminal section; belongs to the ROK (NagC/XylR) family. As to quaternary structure, homodimer. Homotetramer. Homohexamer. The hexameric form exhibits both enzyme activities, whereas the dimeric form only catalyzes the phosphorylation of N-acyl-D-mannosamine. In terms of processing, phosphorylated. Phosphorylation by PKC activates the UDP-N-acetylglucosamine 2-epimerase activity. Widely expressed. Highest expression is observed in liver.

It localises to the cytoplasm. The protein resides in the cytosol. It carries out the reaction UDP-N-acetyl-alpha-D-glucosamine + H2O = aldehydo-N-acetyl-D-mannosamine + UDP + H(+). The catalysed reaction is an N-acyl-D-mannosamine + ATP = an N-acyl-D-mannosamine 6-phosphate + ADP + H(+). It functions in the pathway amino-sugar metabolism; N-acetylneuraminate biosynthesis. With respect to regulation, the UDP-N-acetylglucosamine 2-epimerase activity, in contrast to the N-acetylmannosamine kinase activity, exhibits allosteric regulation by cytidine monophosphate-N-acetylneuraminic acid (CMP-Neu5Ac), the end product of neuraminic acid biosynthesis. Moreover, the activity is contingent upon the oligomeric state of the enzyme. The monomeric form is inactive, while the dimeric form selectively catalyzes the phosphorylation of N-acetylmannosamine. The hexameric form, on the other hand, demonstrates full proficiency in both enzyme activities. Furthermore, the UDP-N-acetylglucosamine 2-epimerase activity is increased by PKC-mediated phosphorylation. Bifunctional enzyme that possesses both UDP-N-acetylglucosamine 2-epimerase and N-acetylmannosamine kinase activities, and serves as the initiator of the biosynthetic pathway leading to the production of N-acetylneuraminic acid (NeuAc), a critical precursor in the synthesis of sialic acids. By catalyzing this pivotal and rate-limiting step in sialic acid biosynthesis, this enzyme assumes a pivotal role in governing the regulation of cell surface sialylation. Sialic acids represent a category of negatively charged sugars that reside on the surface of cells as terminal components of glycoconjugates and mediate important functions in various cellular processes, including cell adhesion, signal transduction, and cellular recognition. This Rattus norvegicus (Rat) protein is Bifunctional UDP-N-acetylglucosamine 2-epimerase/N-acetylmannosamine kinase.